Here is a 428-residue protein sequence, read N- to C-terminus: Ammonium transporter AmtB (428 aa).

The first 22 residues, 1 to 22, serve as a signal peptide directing secretion; that stretch reads MKIATIKTGLASLAMLPGLVMA. Residues 23–32 lie on the Periplasmic side of the membrane; the sequence is APAVADKADN. A helical membrane pass occupies residues 33-54; it reads AFMMICTALVLFMTIPGIALFY. The Cytoplasmic segment spans residues 55 to 65; sequence GGLIRGKNVLS. The chain crosses the membrane as a helical span at residues 66–90; the sequence is MLTQVTVTFALVCILWVVYGYSLAF. At 91–119 the chain is on the periplasmic side; it reads GEGNNFFGNINWLMLKNIELTAVMGSIYQ. The chain crosses the membrane as a helical span at residues 120-142; sequence YIHVAFQGSFACITVGLIVGALA. At 143–146 the chain is on the cytoplasmic side; that stretch reads ERIR. Residues 147–171 form a helical membrane-spanning segment; the sequence is FSAVLIFVVVWLTLSYIPIAHMVWG. The Periplasmic portion of the chain corresponds to 172-185; that stretch reads GGLLASHGALDFAG. Residues 186–201 traverse the membrane as a helical segment; it reads GTVVHINAAIAGLVGA. The Cytoplasmic portion of the chain corresponds to 202-221; the sequence is YLIGKRVGFGKEAFKPHNLP. A helical membrane pass occupies residues 222-241; sequence MVFTGTAILYIGWFGFNAGS. An NH4(+)-binding site is contributed by serine 241. Topologically, residues 242–248 are periplasmic; sequence AGTANEI. The helical transmembrane segment at 249–273 threads the bilayer; that stretch reads AALAFVNTVVATAAAILGWIFGEWA. At 274 to 279 the chain is on the cytoplasmic side; the sequence is LRGKPS. Residues 280-300 form a helical membrane-spanning segment; sequence LLGACSGAIAGLVGVTPACGY. Topologically, residues 301-302 are periplasmic; the sequence is IG. Residues 303–321 form a helical membrane-spanning segment; it reads VGGALIIGVVAGLAGLWGV. The Cytoplasmic portion of the chain corresponds to 322–333; that stretch reads TMLKRLLRVDDP. A helical membrane pass occupies residues 334–355; the sequence is CDVFGVHGVCGIVGCIMTGIFA. Topologically, residues 356-370 are periplasmic; sequence ASSLGGVGFAEGVTM. The helical transmembrane segment at 371-399 threads the bilayer; sequence GHQLLVQLESIAITIVWSGVVAFIGYKLA. Residues 400 to 428 are Cytoplasmic-facing; sequence DLTVGLRVPEEQEREGLDVNSHGENAYNA.

This sequence belongs to the ammonia transporter channel (TC 1.A.11.2) family. Homotrimer. In response to elevation of the extracellular ammonium concentration, interacts and forms a complex with GlnK.

It is found in the cell inner membrane. In the presence of high extracellular ammonium concentrations, transport activity is inhibited by interaction with the regulatory protein GlnK. Formation of the GlnK-AmtB complex is influenced by intracellular pools of the effector molecules ATP, ADP, Mg(2+) and 2-oxoglutarate. The GlnK-AmtB interaction is also controlled by the level of intracellular glutamine and the uridylylation status of GlnK. Involved in the uptake of ammonium/ammonia (NH(4)(+)/NH(3)). Transport is electrogenic. Following sequestration of NH(4)(+) at the periplasmic face, NH(4)(+) is deprotonated and neutral NH(3) is transported into the cytoplasm. Neutral NH(3) and charged H(+) are carried separately across the membrane on a unique two-lane pathway, before recombining to NH(4)(+) inside the cell. This is Ammonium transporter AmtB (amtB) from Escherichia coli O157:H7.